The primary structure comprises 152 residues: MRLWFCLSLFIVLCLEHFPGTLADERNVPESEEKTEQFLRDLPKINRKGPRPPGFSPFRGKFHSQTLRDLPKINRKGPRPPGFSPFRGKFHSQTLRDLPKINRKGPRPPGFSPFRGKFHSQSLRDLPKINRKGPRPPGFSPFRGKFHSQSHV.

Positions 1 to 23 are cleaved as a signal peptide; sequence MRLWFCLSLFIVLCLEHFPGTLA. Residues 28 to 44 are compositionally biased toward basic and acidic residues; sequence VPESEEKTEQFLRDLPK. A disordered region spans residues 28–152; that stretch reads VPESEEKTEQ…RGKFHSQSHV (125 aa).

This sequence belongs to the bradykinin-related peptide family. Expressed by the skin glands.

It localises to the secreted. In terms of biological role, potent vasodilator. Binds B1 (BDKRB1) and B2 (BDKRB2) bradykinin receptors. This is Kininogen-1c from Bombina maxima (Giant fire-bellied toad).